Consider the following 202-residue polypeptide: Coiled-coil domain-containing protein mdt-28 (202 aa).

2 stretches are compositionally biased toward acidic residues: residues Met-1–Glu-15 and Glu-28–Tyr-45. A disordered region spans residues Met-1–Pro-83. Residues Ile-159–Ser-184 adopt a coiled-coil conformation.

In terms of assembly, interacts with mdt-6 and mdt-30. As to expression, ubiquitously expressed in tissues including epidermal, intestinal, pharyngeal and uterine, and is also expressed in vulval muscle cells and gut granules.

It localises to the nucleus. It is found in the cytoplasm. Its function is as follows. Plays a role in normal growth and development. The sequence is that of Coiled-coil domain-containing protein mdt-28 from Caenorhabditis elegans.